Consider the following 500-residue polypeptide: Enolase (500 aa).

Substrate is bound by residues His-225 and Glu-234. Glu-277 (proton donor) is an active-site residue. Mg(2+)-binding residues include Asp-312, Glu-361, and Asp-386. Residues Glu-361 and Asp-386 each coordinate substrate. The active-site Proton acceptor is Lys-411. Residues Ser-438–Ser-441 and Lys-462 each bind substrate.

This sequence belongs to the enolase family. Homodimer. Mg(2+) is required as a cofactor.

Its subcellular location is the cytoplasm. It catalyses the reaction (2R)-2-phosphoglycerate = phosphoenolpyruvate + H2O. It functions in the pathway carbohydrate degradation; glycolysis; pyruvate from D-glyceraldehyde 3-phosphate: step 4/5. Its function is as follows. Enzyme of the glycolytic pathway. Glycolysis is essential in glial cells but not in neurons; neurons rely on the citric acid cycle for their energy needs, and on lactate and alanine secreted into the hemolymph by glial cells to fuel it. The protein is Enolase of Drosophila melanogaster (Fruit fly).